Here is a 422-residue protein sequence, read N- to C-terminus: 4-hydroxy-3-methylbut-2-en-1-yl diphosphate synthase (flavodoxin) (422 aa).

[4Fe-4S] cluster is bound by residues C316, C319, C362, and E369.

Belongs to the IspG family. [4Fe-4S] cluster serves as cofactor.

It carries out the reaction (2E)-4-hydroxy-3-methylbut-2-enyl diphosphate + oxidized [flavodoxin] + H2O + 2 H(+) = 2-C-methyl-D-erythritol 2,4-cyclic diphosphate + reduced [flavodoxin]. Its pathway is isoprenoid biosynthesis; isopentenyl diphosphate biosynthesis via DXP pathway; isopentenyl diphosphate from 1-deoxy-D-xylulose 5-phosphate: step 5/6. Functionally, converts 2C-methyl-D-erythritol 2,4-cyclodiphosphate (ME-2,4cPP) into 1-hydroxy-2-methyl-2-(E)-butenyl 4-diphosphate. This chain is 4-hydroxy-3-methylbut-2-en-1-yl diphosphate synthase (flavodoxin), found in Ehrlichia ruminantium (strain Welgevonden).